We begin with the raw amino-acid sequence, 351 residues long: Inactive RHOMBOID-like protein 8 (351 aa).

The next 7 helical transmembrane spans lie at 48–68 (TWLVSVFVLLQIVLFAVTMGV), 130–150 (WLHSGLFHLFINLGSLIFVGI), 160–180 (RIAVIYFLSGIMGSLFAVLFV), 183–203 (IPSISSGAAFFGLIGAMLSAL), 216–236 (ALAIIFTIFTVNFLIGFLPFI), 239–259 (FANIGGFISGFLLGFVLLFKP), and 294–314 (IICLLVFCGILAGVLLAACWG).

The protein belongs to the peptidase S54 family. Expressed in pollen mother cell.

It is found in the golgi apparatus membrane. Probable inactive rhomboid-type serine protease. Its function is as follows. Probably essential for the meiosis stage-specific callose accumulation and pollen exine formation. This is Inactive RHOMBOID-like protein 8 from Arabidopsis thaliana (Mouse-ear cress).